The chain runs to 405 residues: Enoyl-[acyl-carrier-protein] reductase [NADH] (405 aa).

Residues 51–56, 77–78, 114–115, and 142–143 each bind NAD(+); these read GASSGY, FE, DA, and LA. Y228 is a substrate binding site. Y238 acts as the Proton donor in catalysis. NAD(+) contacts are provided by residues K247 and 276–278; that span reads VVT.

The protein belongs to the TER reductase family. As to quaternary structure, monomer.

It catalyses the reaction a 2,3-saturated acyl-[ACP] + NAD(+) = a (2E)-enoyl-[ACP] + NADH + H(+). Its pathway is lipid metabolism; fatty acid biosynthesis. Involved in the final reduction of the elongation cycle of fatty acid synthesis (FAS II). Catalyzes the reduction of a carbon-carbon double bond in an enoyl moiety that is covalently linked to an acyl carrier protein (ACP). The polypeptide is Enoyl-[acyl-carrier-protein] reductase [NADH] (Chromohalobacter salexigens (strain ATCC BAA-138 / DSM 3043 / CIP 106854 / NCIMB 13768 / 1H11)).